Here is a 143-residue protein sequence, read N- to C-terminus: Flagellar assembly factor FliW (143 aa).

The protein belongs to the FliW family. In terms of assembly, interacts with translational regulator CsrA and flagellin(s).

The protein localises to the cytoplasm. Acts as an anti-CsrA protein, binds CsrA and prevents it from repressing translation of its target genes, one of which is flagellin. Binds to flagellin and participates in the assembly of the flagellum. This Clostridium botulinum (strain Langeland / NCTC 10281 / Type F) protein is Flagellar assembly factor FliW.